A 449-amino-acid polypeptide reads, in one-letter code: Protein trichome birefringence-like 35 (449 aa).

The chain crosses the membrane as a helical; Signal-anchor for type II membrane protein span at residues 12–29; that stretch reads LPLAGLLFILVVTFMILF. The short motif at 185–187 is the GDS motif element; the sequence is GDS. The DCXHWCLPGXXDXWN motif signature appears at 428 to 442; sequence DCTHWCVPGVPDVWN.

It belongs to the PC-esterase family. TBL subfamily.

Its subcellular location is the membrane. May act as a bridging protein that binds pectin and other cell wall polysaccharides. Probably involved in maintaining esterification of pectins. May be involved in the specific O-acetylation of cell wall polymers. This Arabidopsis thaliana (Mouse-ear cress) protein is Protein trichome birefringence-like 35 (TBL35).